Consider the following 97-residue polypeptide: Mitochondrial import inner membrane translocase subunit Tim8 A (97 aa).

A Twin CX3C motif motif is present at residues 43-66 (CWEKCMDKPGPKLDSRAEACFVNC). Intrachain disulfides connect cysteine 43–cysteine 66 and cysteine 47–cysteine 62. 4 positions are modified to phosphoserine: serine 57, serine 87, serine 94, and serine 96.

It belongs to the small Tim family. As to quaternary structure, heterohexamer; composed of 3 copies of TIMM8A and 3 copies of TIMM13, named soluble 70 kDa complex. Associates with the TIM22 complex, whose core is composed of TIMM22.

It is found in the mitochondrion inner membrane. Functionally, mitochondrial intermembrane chaperone that participates in the import and insertion of some multi-pass transmembrane proteins into the mitochondrial inner membrane. Also required for the transfer of beta-barrel precursors from the TOM complex to the sorting and assembly machinery (SAM complex) of the outer membrane. Acts as a chaperone-like protein that protects the hydrophobic precursors from aggregation and guide them through the mitochondrial intermembrane space. The TIMM8-TIMM13 complex mediates the import of proteins such as TIMM23, SLC25A12/ARALAR1 and SLC25A13/ARALAR2, while the predominant TIMM9-TIMM10 70 kDa complex mediates the import of much more proteins. The polypeptide is Mitochondrial import inner membrane translocase subunit Tim8 A (TIMM8A) (Bos taurus (Bovine)).